The primary structure comprises 266 residues: Ubiquinone biosynthesis protein COQ4 homolog, mitochondrial (266 aa).

H169, D170, H173, and E185 together coordinate Zn(2+).

Belongs to the COQ4 family. In terms of assembly, component of a multi-subunit COQ enzyme complex. The cofactor is Zn(2+).

The protein localises to the mitochondrion inner membrane. The catalysed reaction is a 4-hydroxy-3-methoxy-5-(all-trans-polyprenyl)benzoate + H(+) = a 2-methoxy-6-(all-trans-polyprenyl)phenol + CO2. It participates in cofactor biosynthesis; ubiquinone biosynthesis. Its function is as follows. Lyase that catalyzes the C1-decarboxylation of 4-hydroxy-3-methoxy-5-(all-trans-polyprenyl)benzoic acid into 2-methoxy-6-(all-trans-polyprenyl)phenol during ubiquinone biosynthesis. The protein is Ubiquinone biosynthesis protein COQ4 homolog, mitochondrial of Drosophila ananassae (Fruit fly).